A 95-amino-acid chain; its full sequence is Large ribosomal subunit protein bL27 (95 aa).

Residues 1-25 form a disordered region; that stretch reads MAHKKGTGSTRNGRDSNAQRLGVKR. A compositionally biased stretch (polar residues) spans 7-19; sequence TGSTRNGRDSNAQ.

Belongs to the bacterial ribosomal protein bL27 family.

This is Large ribosomal subunit protein bL27 from Gloeobacter violaceus (strain ATCC 29082 / PCC 7421).